The following is a 199-amino-acid chain: Early nodulin-like protein 3 (199 aa).

An N-terminal signal peptide occupies residues 1-23 (MGLVMRFDLYLMFVMLMGLGFTI). The region spanning 27–128 (YKFYVGGKDG…GQKLAVKVLS (102 aa)) is the Phytocyanin domain. N-linked (GlcNAc...) asparagine glycosylation is found at N57 and N83. An intrachain disulfide couples C82 to C116. Residues 130–180 (VHHSHSPRHTSPSPSPVHQELSSPGPSPGVEPSSDSNSRVPAPGPATAPNS) are disordered. Residues 138–165 (HTSPSPSPVHQELSSPGPSPGVEPSSDS) are compositionally biased toward low complexity. Residue N179 is the site of GPI-anchor amidated asparagine attachment. Positions 180–199 (SAGLVGPGMVVLVIMISSLF) are cleaved as a propeptide — removed in mature form.

Belongs to the early nodulin-like (ENODL) family. Confined to flowers.

The protein localises to the cell membrane. Its function is as follows. May act as a carbohydrate transporter. This chain is Early nodulin-like protein 3, found in Arabidopsis thaliana (Mouse-ear cress).